Consider the following 1140-residue polypeptide: GPI inositol-deacylase (1140 aa).

The segment at 1–84 (MHRRSSGSSP…TTWASHDPPR (84 aa)) is disordered. Residues 55-78 (GKSTPRSRNSSTWRTLSSATTTWA) are compositionally biased toward polar residues. Residue asparagine 63 is glycosylated (N-linked (GlcNAc...) asparagine). The helical transmembrane segment at 117–137 (SCSILTALTTILACVFLFSIV) threads the bilayer. Residue serine 304 is part of the active site. Residues 782–802 (LVMRYRTVFAAFPLLVVSLTL) traverse the membrane as a helical segment. N-linked (GlcNAc...) asparagine glycosylation occurs at asparagine 862. 7 helical membrane-spanning segments follow: residues 882–902 (AFFW…CVLL), 905–925 (VALI…SKSG), 952–972 (VLLV…VACI), 1002–1022 (SVFI…LVWA), 1039–1059 (VLSI…SMIP), 1070–1090 (SVLL…YAYI), and 1094–1114 (LVNI…GFSL).

This sequence belongs to the GPI inositol-deacylase family.

It is found in the endoplasmic reticulum membrane. Involved in inositol deacylation of GPI-anchored proteins which plays important roles in the quality control and ER-associated degradation of GPI-anchored proteins. The polypeptide is GPI inositol-deacylase (bst1) (Emericella nidulans (strain FGSC A4 / ATCC 38163 / CBS 112.46 / NRRL 194 / M139) (Aspergillus nidulans)).